Here is an 83-residue protein sequence, read N- to C-terminus: uncharacterized protein (83 aa).

A disordered region spans residues 15–36 (RLKNGRGNKTMSESDYNTSDSG). Positions 21-35 (GNKTMSESDYNTSDS) are enriched in polar residues.

This is an uncharacterized protein from Aedes vexans (Inland floodwater mosquito).